The following is a 375-amino-acid chain: tRNA-specific 2-thiouridylase MnmA (375 aa).

ATP contacts are provided by residues 18-25 (GMSGGVDS) and M44. The tract at residues 104–106 (NPD) is interaction with target base in tRNA. Residue C109 is the Nucleophile of the active site. A disulfide bond links C109 and C206. G134 lines the ATP pocket. The segment at 156–158 (KDQ) is interaction with tRNA. The active-site Cysteine persulfide intermediate is C206. Residues 318-319 (RY) form an interaction with tRNA region.

This sequence belongs to the MnmA/TRMU family.

It is found in the cytoplasm. It catalyses the reaction S-sulfanyl-L-cysteinyl-[protein] + uridine(34) in tRNA + AH2 + ATP = 2-thiouridine(34) in tRNA + L-cysteinyl-[protein] + A + AMP + diphosphate + H(+). Functionally, catalyzes the 2-thiolation of uridine at the wobble position (U34) of tRNA, leading to the formation of s(2)U34. This Colwellia psychrerythraea (strain 34H / ATCC BAA-681) (Vibrio psychroerythus) protein is tRNA-specific 2-thiouridylase MnmA.